A 199-amino-acid polypeptide reads, in one-letter code: MLPYPPSIRNAISHLSRLPGIGQKTAERLAMHLLHVPDRAVHELARSLVDLKKNTRMCSVCFTLSDTPVCAICGDPDRNASLLCVVEGPTEVMAIEKTAAFKGVYHVLHGVLSPMDGIGPDDIRIRELVDRVKKGIVKEIVLATDTRVEGEATAAYLVEVLKPFPVTVTRIASGMPAGGEVRYSDPVTLKNAMEKRYAL.

Residues 58–73 (CSVCFTLSDTPVCAIC) form a C4-type zinc finger. A Toprim domain is found at 81–176 (SLLCVVEGPT…TVTRIASGMP (96 aa)).

This sequence belongs to the RecR family.

In terms of biological role, may play a role in DNA repair. It seems to be involved in an RecBC-independent recombinational process of DNA repair. It may act with RecF and RecO. The polypeptide is Recombination protein RecR (Desulfosudis oleivorans (strain DSM 6200 / JCM 39069 / Hxd3) (Desulfococcus oleovorans)).